Reading from the N-terminus, the 68-residue chain is MEC1-mediated checkpoint protein HUG1 (68 aa).

It localises to the cytoplasm. The protein localises to the nucleus. In terms of biological role, involved in the MEC1-mediated checkpoint response to DNA damage and replication arrest. In Saccharomyces cerevisiae (strain ATCC 204508 / S288c) (Baker's yeast), this protein is MEC1-mediated checkpoint protein HUG1 (HUG1).